Reading from the N-terminus, the 231-residue chain is 2-C-methyl-D-erythritol 4-phosphate cytidylyltransferase (231 aa).

It belongs to the IspD/TarI cytidylyltransferase family. IspD subfamily.

The catalysed reaction is 2-C-methyl-D-erythritol 4-phosphate + CTP + H(+) = 4-CDP-2-C-methyl-D-erythritol + diphosphate. The protein operates within isoprenoid biosynthesis; isopentenyl diphosphate biosynthesis via DXP pathway; isopentenyl diphosphate from 1-deoxy-D-xylulose 5-phosphate: step 2/6. Functionally, catalyzes the formation of 4-diphosphocytidyl-2-C-methyl-D-erythritol from CTP and 2-C-methyl-D-erythritol 4-phosphate (MEP). The protein is 2-C-methyl-D-erythritol 4-phosphate cytidylyltransferase of Shewanella pealeana (strain ATCC 700345 / ANG-SQ1).